The primary structure comprises 504 residues: MKLLEQIEKWAAETPDQTAFVWRDAKITYKQLKEDSDALAHWISSEYPDDRSPIMVYGHMQPEMIINFLGCVKAGHAYIPVDLSIPADRVQRIAENSGAKLLLSATAVTVTDLPVRIVSEDNLKDIFFTHKGNTPNPEHAVKGDENFYIIYTSGSTGNPKGVQITYNCLVSFTKWAVEDFNLQTGQVFLNQAPFSFDLSVMDIYPSLVTGGTLWAIDKDMIARPKDLFASLEQSDIQVWTSTPSFAEMCLMEASFSESMLPNMKTFLFCGEVLPNEVARKLIERFPKATIMNTYGPTEATVAVTGIHVTEEVLDQYKSLPVGYCKSDCRLLIMKEDGTIAPDGEKGEIVIVGPSVSVGYLGSPELTEKAFTMIDGERAYKTGDAGYVENGLLFYNGRLDFQIKLHGYRMELEEIEHHLRACSYVEGAVIVPIKKGEKYDYLLAVVVPGEHSFEKEFKLTSAIKKELNERLPNYMIPRKFMYQSSIPMTPNGKVDRKKLLSEVTA.

Residue 152–153 coordinates ATP; that stretch reads TS. A D-alanine-binding site is contributed by aspartate 197. 292-297 lines the ATP pocket; sequence NTYGPT. Valine 301 serves as a coordination point for D-alanine. ATP-binding positions include aspartate 383, 394–397, and lysine 492; that span reads YNGR. Lysine 492 contributes to the D-alanine binding site.

It belongs to the ATP-dependent AMP-binding enzyme family. DltA subfamily.

The protein resides in the cytoplasm. The enzyme catalyses holo-[D-alanyl-carrier protein] + D-alanine + ATP = D-alanyl-[D-alanyl-carrier protein] + AMP + diphosphate. The protein operates within cell wall biogenesis; lipoteichoic acid biosynthesis. In terms of biological role, catalyzes the first step in the D-alanylation of lipoteichoic acid (LTA), the activation of D-alanine and its transfer onto the D-alanyl carrier protein (Dcp) DltC. In an ATP-dependent two-step reaction, forms a high energy D-alanyl-AMP intermediate, followed by transfer of the D-alanyl residue as a thiol ester to the phosphopantheinyl prosthetic group of the Dcp. D-alanylation of LTA plays an important role in modulating the properties of the cell wall in Gram-positive bacteria, influencing the net charge of the cell wall. In Bacillus cereus (strain B4264), this protein is D-alanine--D-alanyl carrier protein ligase.